The chain runs to 1310 residues: MNMGSVAGAVLKMLLLLSTQNWNRVEAGNSYDCDEPLVSALPQASFSSSSELSSSHGPGFARLNRRDGAGGWSPLVSNKYQWLQIDLGERMEVTSVATQGGYGSSNWVTSYLLMFSDSGRNWKQYRQEDSIWGFSGNANADSVVYYRLQPSIKARFLRFIPLEWNPKGRIGMRIEVFGCAYRSVVIDLDGKSSLLYRFDQNSLSPIRDIISLKFKTMESDGILLHRAGPAGDHITLELRRGKLFLLINSGDARLTSSSTLINLTLGSLLDDQHWHSVLIQRLGKQVNFTVDEHRRHFHAQGEFNYLDLDYEISFGGISAPAKSVSLPYKHFHGCLENLFYNGVDVIGLVKEHSPQIITMGNASFSCSQPQSMPLTFLSPRSYLVLPASTKEEAISASFQFRTWNKAGLLLFSELQLVSGSLLLLLSDGKLKLTLYQPGKSPSDITAGAGLGDGQWHSVSLSAKRNHLSVVVDGHISPASPWLGPEQVNSGGVFYFGGCPDKGFGSKCKSPLGGFQGCMRLISINNKMVDLIAVQQGALGNFSDLQIDSCGISDRCLPNSCEHGGECSQSWSTFHCNCTNTGYTGATCHSSVYEQSCEAYKHQGNASGFYYIDSDGSGPLQPFLLYCNMTETAWTVMQHNGSDLMRVRNTHSENAHTGVFEYTASMEQLQAAINRAEHCQQELVYYCKKSRLVNQQDGSPRSWWVGRTNETQTYWGGSLPVHQKCTCGLEGNCIDAQYHCNCDADLNEWTNDTGFLSYKEHLPVTKIVITDTGRPHSEAAYKLGPLLCRGDRPFWNAASFNTEASYLHFPTFHGELSADVSFFFKTTALSGVFLENLGITDFIRIELRSPTTVTFSFDVGNGPFELSVHSPTHFNDNQWHHVRVERNMKEASLRVDELPPKIQAAPTDGHVLLQLNSQLFVGGTATRQRGFLGCIRSLQLNGMALDLEERATVTPGVQPGCRGHCGSYGKLCRHGGKCREKPSGFFCDCSSSAYAGPFCSKEISAYFGSGSSVIYNFQENYSLSKNSSFHAASFHGDMKLSREMIKFSFRTTRAPSLLLHMSSFYKEYLSIIIAKNGSLQIRYKLNKYHEPDVISFDLKSMADGQLHHIKINREEGMVFVEIDENTRRQTYLSSGTEFSAVKSLVLGRMLEYSDVDQETALAAAHGFTGCLSAVQFSHIAPLKAALQPGPPAPVTVTGHVTESSCVAPSGTDATSRERTHSFADHSGTMDDREPLTHAIKSDSAVIGGLIAVVIFILLCVSAIAVRIYQQKRLYKRNEAKRSENVDSAEAVLKSELHIQNAVGENQKEYFF.

The N-terminal stretch at 1 to 27 is a signal peptide; sequence MNMGSVAGAVLKMLLLLSTQNWNRVEA. Residues 28–1243 are Extracellular-facing; the sequence is GNSYDCDEPL…LTHAIKSDSA (1216 aa). The F5/8 type C domain occupies 33-179; the sequence is CDEPLVSALP…IGMRIEVFGC (147 aa). A disulfide bond links Cys33 and Cys179. In terms of domain architecture, Laminin G-like 1 spans 214 to 346; it reads FKTMESDGIL…NLFYNGVDVI (133 aa). N-linked (GlcNAc...) asparagine glycans are attached at residues Asn262, Asn287, and Asn361. Cystine bridges form between Cys334–Cys366, Cys517–Cys549, Cys555–Cys566, and Cys560–Cys575. Residues 400–529 enclose the Laminin G-like 2 domain; the sequence is FRTWNKAGLL…LISINNKMVD (130 aa). Residue Asn540 is glycosylated (N-linked (GlcNAc...) asparagine). Residues 551–588 enclose the EGF-like 1 domain; that stretch reads ISDRCLPNSCEHGGECSQSWSTFHCNCTNTGYTGATCH. Asn576 is a glycosylation site (N-linked (GlcNAc...) asparagine). Cys577 and Cys587 are disulfide-bonded. Residues 589–794 enclose the Fibrinogen C-terminal domain; the sequence is SSVYEQSCEA…LLCRGDRPFW (206 aa). Residues Asn604, Asn627, Asn639, Asn708, and Asn750 are each glycosylated (N-linked (GlcNAc...) asparagine). The Laminin G-like 3 domain maps to 795-960; it reads NAASFNTEAS…TVTPGVQPGC (166 aa). 4 disulfides stabilise this stretch: Cys933/Cys960, Cys964/Cys977, Cys971/Cys986, and Cys988/Cys998. In terms of domain architecture, EGF-like 2 spans 960 to 999; sequence CRGHCGSYGKLCRHGGKCREKPSGFFCDCSSSAYAGPFCS. Residues Asn1019, Asn1025, and Asn1075 are each glycosylated (N-linked (GlcNAc...) asparagine). The 157-residue stretch at 1048-1204 folds into the Laminin G-like 4 domain; the sequence is FRTTRAPSLL…VTGHVTESSC (157 aa). Cys1169 and Cys1204 are oxidised to a cystine. A helical membrane pass occupies residues 1244–1264; sequence VIGGLIAVVIFILLCVSAIAV. The Cytoplasmic portion of the chain corresponds to 1265–1310; that stretch reads RIYQQKRLYKRNEAKRSENVDSAEAVLKSELHIQNAVGENQKEYFF.

It belongs to the neurexin family. Interacts with TIAM1. As to expression, specifically present in developing cortical interneurons: highly expressed in cortical parvalbumin (PV) cells and midbrain dopaminergic neurons and is localized presynaptically (at protein level). Also present in the substantia nigra pars compacta (SnC) and ventral tegmental area (VTA) midbrain dopaminergic projection populations.

It is found in the presynaptic cell membrane. Presynaptic protein involved in both dopaminergic synaptic transmission and GABAergic system, thereby participating in the structural maturation of inhibitory interneuron synapses. Involved in the dopaminergic synaptic transmission by attenuating dopamine release through a presynaptic mechanism. Also participates in the GABAergic system. The polypeptide is Contactin-associated protein-like 4 (Cntnap4) (Mus musculus (Mouse)).